The chain runs to 84 residues: M-zodatoxin-Lt2b (84 aa).

The N-terminal stretch at 1–22 (MKYFVIALALAVALVCIAESTA) is a signal peptide. A propeptide spanning residues 23-58 (YEVNEELENELDDLDDAAWLAVAEELQGLEDFEESR) is cleaved from the precursor. The Processing quadruplet motif signature appears at 55-58 (EESR).

Post-translationally, cleavage of the propeptide depends on the processing quadruplet motif (XXXR, with at least one of X being E). Expressed by the venom gland.

It is found in the secreted. Functionally, has antimicrobial activity against both Gram-positive and Gram-negative bacteria, and yeasts. Also has a strong hemolytic activity against rabbit erythrocytes. Causes paralysis, but is not lethal when injected into insect (M.domestica) larvae. The sequence is that of M-zodatoxin-Lt2b from Lachesana tarabaevi (Spider).